The chain runs to 347 residues: NADH-quinone oxidoreductase subunit H (347 aa).

Helical transmembrane passes span 13 to 33, 82 to 102, 115 to 135, 161 to 181, 198 to 218, 258 to 278, 286 to 306, and 321 to 341; these read LIMI…IAYI, AVFL…WAVV, VGIL…IMGG, IGLV…TDIV, FLDW…ISAL, AVVL…LPPV, VPGI…FAMV, and LGWK…AFVL.

Belongs to the complex I subunit 1 family. NDH-1 is composed of 14 different subunits. Subunits NuoA, H, J, K, L, M, N constitute the membrane sector of the complex.

Its subcellular location is the cell inner membrane. It catalyses the reaction a quinone + NADH + 5 H(+)(in) = a quinol + NAD(+) + 4 H(+)(out). In terms of biological role, NDH-1 shuttles electrons from NADH, via FMN and iron-sulfur (Fe-S) centers, to quinones in the respiratory chain. The immediate electron acceptor for the enzyme in this species is believed to be ubiquinone. Couples the redox reaction to proton translocation (for every two electrons transferred, four hydrogen ions are translocated across the cytoplasmic membrane), and thus conserves the redox energy in a proton gradient. This subunit may bind ubiquinone. In Rhizobium rhizogenes (strain K84 / ATCC BAA-868) (Agrobacterium radiobacter), this protein is NADH-quinone oxidoreductase subunit H.